Reading from the N-terminus, the 282-residue chain is Nucleotide-binding protein Ping_2894 (282 aa).

8–15 (GRSGSGKT) provides a ligand contact to ATP. Position 56–59 (56–59 (DIRN)) interacts with GTP.

The protein belongs to the RapZ-like family.

Its function is as follows. Displays ATPase and GTPase activities. This Psychromonas ingrahamii (strain DSM 17664 / CCUG 51855 / 37) protein is Nucleotide-binding protein Ping_2894.